Here is a 529-residue protein sequence, read N- to C-terminus: uncharacterized protein (529 aa).

A signal peptide spans 1–20 (MYFLILILVLLLIMVAAATA).

This is an uncharacterized protein from Orgyia pseudotsugata multicapsid polyhedrosis virus (OpMNPV).